A 1181-amino-acid chain; its full sequence is MANSSRSRAILSVNLDAVMANDPLRELFEACKTGEIAKVKKLITPQTVNARDTAGRKSTPLHFAAGYGRREVVEFLLNSGASIQACDEGGLHPLHNCCSFGHAEVVRLLLKAGASPNTTDNWNYTPLHEAASKGKVDVCLALLQHGANHTIRNSEQKTPLELADEATRPVLTGEYRKDELLEAARSGAEDRLLALLTPLNVNCHASDGRRSTPLHLAAGYNRIGIVEILLANGADVHAKDKGGLVPLHNACSYGHFDVTKLLIQAGANVNANDLWAFTPLHEAASKSRVEVCSLLLSRGADPTLLNCHSKSAIDAAPTRELRERIAFEYKGHCLLDACRKCDVSRAKKLVCAEIVNFVHPYTGDTPLHLAVVSPDGKRKQLMELLTRKGSLLNEKNKAFLTPLHLAAELLHYDAMEVLLKQGAKVNALDSLGQTPLHRCARDEQAVRLLLSYAADTNIVSLEGLTAAQLASDSVLKLLKNPPDSETHLLEAAKAGDLDTVRRIVLNNPISVNCRDLDGRHSTPLHFAAGFNRVPVVQFLLEHGAEVYAADKGGLVPLHNACSYGHYEVTELLVKHGANVNVSDLWKFTPLHEAAAKGKYDICKLLLKHGADPMKKNRDGATPADLVKESDHDVAELLRGPSALLDAAKKGNLARVQRLVTPESINCRDAQGRNSTPLHLAAGYNNFECAEYLLENGADVNAQDKGGLIPLHNASSYGHLDIAALLIKHKTVVNATDKWGFTPLHEAAQKGRTQLCSLLLAHGADAYMKNQEGQTPIELATADDVKCLLQDAMATSLSQQALSASTQSLTSSSPAPDATAAAAPGTSSSSSSAILSPTTETVLLPTGASMILSVPVPLPLSSSTRISPAQGAEANGAEGSSSDDLLPDADTITNVSGFLSSQQLHHLIELFEREQITLDILAEMGHDDLKQVGVSAYGFRHKILKGIAQLRSTTGIGNNVNLCTLLVDLLPDDKEFVAVEEEMQATIREHRDNGQAGGYFTRYNIIRVQKVQNRKLWERYAHRRQEIAEENFLQSNERMLFHGSPFINAIVQRGFDERHAYIGGMFGAGIYFAEHSSKSNQYVYGIGGGIGCPSHKDKSCYVCPRQLLLCRVALGKSFLQYSAMKMAHAPPGHHSVVGRPSAGGLHFAEYVVYRGEQSYPEYLITYQIVKPDDSSSGTEDTR.

ANK repeat units follow at residues 56–85 (RKST…SIQA), 89–118 (GGLH…SPNT), 122–151 (WNYT…NHTI), 209–238 (RRST…DVHA), 242–271 (GGLV…NVNA), 275–304 (WAFT…DPTL), 362–394 (TGDT…LLNE), 398–427 (AFLT…KVNA), 431–458 (LGQT…DTNI), 483–513 (DSET…SVNC), 519–548 (RHST…EVYA), 552–581 (GGLV…NVNV), 585–614 (WKFT…DPMK), 638–668 (RGPS…NCRD), 672–701 (RNST…DVNA), 705–734 (GGLI…VVNA), 738–767 (WGFT…DAYM), and 771–799 (EGQT…LSQQ). 2 disordered regions span residues 807 to 834 (SLTS…SAIL) and 864 to 886 (RISP…DLLP). Positions 889-952 (DTITNVSGFL…LKGIAQLRST (64 aa)) constitute an SAM domain. The region spanning 969–1174 (LPDDKEFVAV…YQIVKPDDSS (206 aa)) is the PARP catalytic domain. 4 residues coordinate Zn(2+): Cys1091, His1094, Cys1099, and Cys1102.

Belongs to the ARTD/PARP family. Interacts (via ANK repeats) with PI31.

It carries out the reaction NAD(+) + (ADP-D-ribosyl)n-acceptor = nicotinamide + (ADP-D-ribosyl)n+1-acceptor + H(+).. It catalyses the reaction L-aspartyl-[protein] + NAD(+) = 4-O-(ADP-D-ribosyl)-L-aspartyl-[protein] + nicotinamide. The catalysed reaction is L-glutamyl-[protein] + NAD(+) = 5-O-(ADP-D-ribosyl)-L-glutamyl-[protein] + nicotinamide. Functionally, stimulates proteasome activity, probably by ADP-ribosylation of PI31. Modulates 26S proteasome assembly. The sequence is that of Poly [ADP-ribose] polymerase tankyrase from Drosophila melanogaster (Fruit fly).